The following is a 265-amino-acid chain: Small ribosomal subunit protein uS3 (265 aa).

Residues 43–111 enclose the KH type-2 domain; the sequence is IRTMLKTSLD…QIQLNILEVK (69 aa). Residues 217-265 are disordered; it reads AREQANQKSSRPERRNDRSDGRTGDRRTNAPRTAPAAEAAPVAAAGVEA. Positions 226 to 244 are enriched in basic and acidic residues; that stretch reads SRPERRNDRSDGRTGDRRT. The segment covering 250 to 265 has biased composition (low complexity); that stretch reads APAAEAAPVAAAGVEA.

It belongs to the universal ribosomal protein uS3 family. In terms of assembly, part of the 30S ribosomal subunit. Forms a tight complex with proteins S10 and S14.

Its function is as follows. Binds the lower part of the 30S subunit head. Binds mRNA in the 70S ribosome, positioning it for translation. The chain is Small ribosomal subunit protein uS3 from Clavibacter michiganensis subsp. michiganensis (strain NCPPB 382).